Here is a 25-residue protein sequence, read N- to C-terminus: Small ribosomal subunit protein eS32 (25 aa).

A disordered region spans residues 1 to 25 (MRAKWRKKRMRRLKRKRRKMRQRSK).

This sequence belongs to the eukaryotic ribosomal protein eS32 family. In terms of assembly, component of the large ribosomal subunit.

It is found in the cytoplasm. Its function is as follows. Component of the small ribosomal subunit. The ribosome is a large ribonucleoprotein complex responsible for the synthesis of proteins in the cell. This Cyprinus carpio (Common carp) protein is Small ribosomal subunit protein eS32 (rpl41).